Consider the following 1526-residue polypeptide: High affinity cGMP-specific 3',5'-cyclic phosphodiesterase 9A (1526 aa).

The span at 1 to 43 (MYQDSGCSSSSSRRGSSSAAAATSTAATAAETAAAAAATTTSS) shows a compositional bias: low complexity. Disordered regions lie at residues 1-48 (MYQD…DEET), 266-348 (SSRS…SGTA), and 393-476 (RHHH…ASDC). 2 stretches are compositionally biased toward basic and acidic residues: residues 270-282 (RSSE…HEQD) and 305-314 (EHPSEKPERT). Composition is skewed to low complexity over residues 324–348 (IAVT…SGTA) and 401–440 (QQHQ…ATAT). Residues 441–462 (PSVEQPATSGTTNIHLQPTSLP) show a composition bias toward polar residues. The region spanning 664 to 985 (VKRRFLEICD…EYYRRLNDAQ (322 aa)) is the PDEase domain. Residue histidine 740 is the Proton donor of the active site. 740-744 (HNFRH) contributes to the 3',5'-cyclic GMP binding site. Positions 744, 780, 781, and 890 each coordinate Zn(2+). 3',5'-cyclic GMP-binding residues include aspartate 781 and aspartate 890. Aspartate 781 is a Mg(2+) binding site. Disordered stretches follow at residues 986-1170 (TKTR…SSGG), 1265-1284 (TEAD…KKIP), 1314-1351 (SNGS…GSSW), 1372-1406 (RFGS…DGLG), and 1469-1496 (RYSS…LTTG). Positions 993-1005 (ADSNTSATSDSNS) are enriched in low complexity. Residues 1033-1057 (NSQGSGGGGGGGGGGGAGGGTGSGC) are compositionally biased toward gly residues. Over residues 1065–1093 (VSPQMPRSGSGISVKSRRSIPSQKSASRT) the composition is skewed to polar residues. Residues 1125-1136 (VAEKTSKFKVDT) show a composition bias toward basic and acidic residues. Positions 1139 to 1148 (SSNRSKSSHS) are enriched in low complexity. The span at 1314 to 1324 (SNGSTRSSASS) shows a compositional bias: low complexity. The span at 1325–1340 (GRGGSGVPGGSGGSGM) shows a compositional bias: gly residues. Low complexity-rich tracts occupy residues 1341–1350 (PGPSAGSGSS) and 1375–1397 (STRS…NANG). Over residues 1470 to 1486 (YSSNDSSRHPSNNTLQS) the composition is skewed to polar residues.

Belongs to the cyclic nucleotide phosphodiesterase family. PDE9 subfamily. Zn(2+) is required as a cofactor. Mg(2+) serves as cofactor. As to expression, expressed in Malpighian tubules and adult fly head.

The catalysed reaction is 3',5'-cyclic GMP + H2O = GMP + H(+). Its pathway is purine metabolism; 3',5'-cyclic GMP degradation; GMP from 3',5'-cyclic GMP: step 1/1. Specifically hydrolyzes the second messenger cGMP, which is a key regulator of many important physiological processes. Highly specific: compared to other members of the cyclic nucleotide phosphodiesterase family, has the highest affinity and selectivity for cGMP. This is High affinity cGMP-specific 3',5'-cyclic phosphodiesterase 9A from Drosophila melanogaster (Fruit fly).